The chain runs to 147 residues: Large ribosomal subunit protein uL15 (147 aa).

Residues M1–V46 are disordered. Residues K16–G28 show a composition bias toward basic residues.

This sequence belongs to the universal ribosomal protein uL15 family. As to quaternary structure, part of the 50S ribosomal subunit.

In terms of biological role, binds to the 23S rRNA. This chain is Large ribosomal subunit protein uL15, found in Mesomycoplasma hyopneumoniae (strain 232) (Mycoplasma hyopneumoniae).